We begin with the raw amino-acid sequence, 363 residues long: Flagellar P-ring protein (363 aa).

The signal sequence occupies residues Met-1 to Ala-20.

Belongs to the FlgI family. As to quaternary structure, the basal body constitutes a major portion of the flagellar organelle and consists of four rings (L,P,S, and M) mounted on a central rod.

It localises to the periplasm. It is found in the bacterial flagellum basal body. Functionally, assembles around the rod to form the L-ring and probably protects the motor/basal body from shearing forces during rotation. This chain is Flagellar P-ring protein, found in Shewanella amazonensis (strain ATCC BAA-1098 / SB2B).